A 352-amino-acid chain; its full sequence is Ion-translocating oxidoreductase complex subunit D (352 aa).

Transmembrane regions (helical) follow at residues I20–G40, G42–L62, I89–A109, and P123–L143. T187 is subject to FMN phosphoryl threonine. A run of 5 helical transmembrane segments spans residues I214–L234, W242–F262, L267–L287, L301–P321, and D322–T342.

It belongs to the NqrB/RnfD family. The complex is composed of six subunits: RsxA, RsxB, RsxC, RsxD, RsxE and RsxG. The cofactor is FMN.

Its subcellular location is the cell inner membrane. Its function is as follows. Part of a membrane-bound complex that couples electron transfer with translocation of ions across the membrane. Required to maintain the reduced state of SoxR. The polypeptide is Ion-translocating oxidoreductase complex subunit D (Escherichia coli O81 (strain ED1a)).